A 1084-amino-acid polypeptide reads, in one-letter code: MALPPVKIASRPASPTPSHHHQQAAAASSSSSSSSSHHPPPRIAARPIAPADRSPERVSQHSRGASVHDADSLPPIRPRGSRPSSPSGHAADRAPSSHHNASSTATVPARSTARSLFRDPRTLHPAGRSQSPIAAFRNRSQSSERSRLGPSRSQPNSPLLQSSSLRHHSDATGVHLPPISSLSKELVSDHPDCFAHRRRTPTTSPRATARLHMGNTFRDSSPAASSGSPATMRHDHLAYRHEHSAEEHAKMQRYSDEHPRAMNPTSRASYEHESRGMPYRDSYSAPSRAIEASYHANGARPVHHADSSTNSPQYVPGDVYEHEGSGSPPAAHHAGMRCSNCGVTSTPLWRRAPDGSTICNACGLYIKSHSTHRSASNRLSGSDASPPTHEAKLAAAGPSCSREDDPKSGSCPGDGLCNGTGGTASCSGCPAYNNNLSHALKVSKRESQTSEDPPPARTAERAPPVAEEKMDDDKSVVGALRCTNCQTTTTPLWRRDEDGNNICNACGLYHKLHGTHRPIGMKKSVIKRRKRIPANATAQPTHILDVIPVQMNANGQPVIAPAAGRNAGDSTPKSTESRRASKKSSLTSEQAMREARDREAAMLLMEVGAGARSRNSAQEDDRIHQNGALATSTSFHHDFHSARAGADTARTSHPDDSRSSKRPRQSYPLAPREAYDERDVSAIASPPAYNETHAAGATRSQRSQRSPVDAPLTDRLGRSELHGESSHGTSNAPEHAARASASDGARLGSVVPHHHHHHHHHHANHASHAVHHGHHHHHHHPVTVSASSHGHAGQAPSGMTKLSEVERLRDELLFERRRIDEVLRRAEAILASARAGNFHVEAAGPSTSGLRNGHEASHESPPTGSAQGSPGADARGTRSGHDSIKQEAPDAAPRRSKAFSNSSSSSEKDELESPPPSAHQQLASQPLVAATGAQPASRRNSFEQRMASLPVMAAVPLKRSSPPSTVSNPADNRPLSIAPQPARKATAWGIDTRSTPAASPRSGEKRARADEMDEDDDHWNWDNLYGKAKLEKAGDWRGFARPVEDRRSQSKSNGVTRRESSSTPIAARLPVASSPSQAVSAPRT.

Disordered stretches follow at residues 1–164, 245–283, and 300–337; these read MALP…QSSS, AEEHAKMQRYSDEHPRAMNPTSRASYEHESRGMPYRDSY, and RPVHHADSSTNSPQYVPGDVYEHEGSGSPPAAHHAGMR. Over residues 23-51 the composition is skewed to low complexity; it reads QAAAASSSSSSSSSHHPPPRIAARPIAPA. 2 stretches are compositionally biased toward polar residues: residues 97 to 106 and 128 to 141; these read SHHNASSTAT and RSQSPIAAFRNRSQ. The segment covering 150–164 has biased composition (low complexity); that stretch reads PSRSQPNSPLLQSSS. Basic and acidic residues predominate over residues 245 to 260; sequence AEEHAKMQRYSDEHPR. The GATA-type 1 zinc finger occupies 338–362; sequence CSNCGVTSTPLWRRAPDGSTICNAC. 2 disordered regions span residues 372 to 405 and 442 to 472; these read HRSASNRLSGSDASPPTHEAKLAAAGPSCSREDD and VSKRESQTSEDPPPARTAERAPPVAEEKMDD. Over residues 373–385 the composition is skewed to polar residues; sequence RSASNRLSGSDAS. Residues 482-506 form a GATA-type 2 zinc finger; it reads CTNCQTTTTPLWRRDEDGNNICNAC. Disordered stretches follow at residues 559–595, 643–679, 692–803, 841–940, 953–1019, and 1040–1084; these read IAPAAGRNAGDSTPKSTESRRASKKSSLTSEQAMREA, RAGADTARTSHPDDSRSSKRPRQSYPLAPREAYDERD, THAA…TKLS, EAAG…SRRN, AAVP…DDHW, and ARPV…APRT. 2 stretches are compositionally biased toward basic and acidic residues: residues 650-659 and 715-725; these read RTSHPDDSRS and RLGRSELHGES. Residues 752–781 are compositionally biased toward basic residues; the sequence is PHHHHHHHHHHANHASHAVHHGHHHHHHHP. Over residues 875-888 the composition is skewed to basic and acidic residues; the sequence is RGTRSGHDSIKQEA. The segment covering 961-970 has biased composition (polar residues); sequence SPPSTVSNPA. Low complexity predominate over residues 1070 to 1084; the sequence is PVASSPSQAVSAPRT.

The protein resides in the nucleus. Its function is as follows. Involved in the regulation of secreted ferrichrome-type siderophores. Acts directly or indirectly to repress the biosynthesis of siderophores. The polypeptide is Siderophore biosynthesis regulatory protein URBS1 (URBS1) (Mycosarcoma maydis (Corn smut fungus)).